Reading from the N-terminus, the 236-residue chain is Ribonuclease PH (236 aa).

Residues R86 and 124–126 (GTR) each bind phosphate.

This sequence belongs to the RNase PH family. Homohexameric ring arranged as a trimer of dimers.

It carries out the reaction tRNA(n+1) + phosphate = tRNA(n) + a ribonucleoside 5'-diphosphate. In terms of biological role, phosphorolytic 3'-5' exoribonuclease that plays an important role in tRNA 3'-end maturation. Removes nucleotide residues following the 3'-CCA terminus of tRNAs; can also add nucleotides to the ends of RNA molecules by using nucleoside diphosphates as substrates, but this may not be physiologically important. Probably plays a role in initiation of 16S rRNA degradation (leading to ribosome degradation) during starvation. The polypeptide is Ribonuclease PH (Thermodesulfovibrio yellowstonii (strain ATCC 51303 / DSM 11347 / YP87)).